We begin with the raw amino-acid sequence, 566 residues long: Putative sulfite reductase [NADPH] hemoprotein beta-component (566 aa).

[4Fe-4S] cluster contacts are provided by C430, C436, C475, and C479. Residue C479 participates in siroheme binding.

It belongs to the nitrite and sulfite reductase 4Fe-4S domain family. As to quaternary structure, alpha(8)-beta(8). The alpha component is a flavoprotein, the beta component is a hemoprotein. It depends on siroheme as a cofactor. [4Fe-4S] cluster is required as a cofactor.

The enzyme catalyses hydrogen sulfide + 3 NADP(+) + 3 H2O = sulfite + 3 NADPH + 4 H(+). It participates in sulfur metabolism; hydrogen sulfide biosynthesis; hydrogen sulfide from sulfite (NADPH route): step 1/1. Its function is as follows. Component of the sulfite reductase complex that catalyzes the 6-electron reduction of sulfite to sulfide. This is one of several activities required for the biosynthesis of L-cysteine from sulfate. This is Putative sulfite reductase [NADPH] hemoprotein beta-component from Buchnera aphidicola subsp. Schizaphis graminum (strain Sg).